A 434-amino-acid polypeptide reads, in one-letter code: Tyrosine-protein phosphatase non-receptor type 1 (434 aa).

Positions 3-277 (IEKEFHRLDQ…RFSYLAVIEG (275 aa)) constitute a Tyrosine-protein phosphatase domain. S50 bears the Phosphoserine mark. Substrate is bound by residues D181, 215–221 (CSAGIGR), and Q262. Residue C215 is the Phosphocysteine intermediate of the active site. A disordered region spans residues 291–319 (WKELSNEDLDPPPEHTPPPPRPPKRTSEM).

It belongs to the protein-tyrosine phosphatase family. Non-receptor class 1 subfamily. In terms of assembly, interacts with EPHA3 (phosphorylated); dephosphorylates EPHA3 and may regulate its trafficking and function. Interacts with MET. Interacts with NCK1. Phosphorylated on serine and threonine residues near the N-terminus by casein kinase II (CK2).

The protein resides in the endoplasmic reticulum membrane. It carries out the reaction O-phospho-L-tyrosyl-[protein] + H2O = L-tyrosyl-[protein] + phosphate. May play an important role in CKII- and p60c-src-induced signal transduction cascades. May regulate the EFNA5-EPHA3 signaling pathway which modulates cell reorganization and cell-cell repulsion. May also regulate the hepatocyte growth factor receptor signaling pathway through dephosphorylation of MET. In Gallus gallus (Chicken), this protein is Tyrosine-protein phosphatase non-receptor type 1 (PTPN1).